Reading from the N-terminus, the 561-residue chain is MCGIWALFGSDDCLSVQCLSAMKIAHRGPDAFRFENVNGYTNCCFGFHRLAVVDPLFGMQPIRVKKYPYLWLCYNGEIYNHKALQQRFEFEYQTNVDGEIILHLYDKGGIEQTICMLDGVFAFILLDTANKKVFLGRDTYGVRPLFKAMTEDGFLAVCSEAKGLVSLKHSTTPFLKVEPFLPGHYEVLDLKPNGKVASVEMVKYHHCRDEPLHALYDSVEKLFQGFELETVKSNLRILFDSAVRKRLMTDRRIGCLLSGGLDSSLVAASLLKQLKEAQVQYPLQTFAIGMEDSPDLLAARKVANYIGSEHHEVLFNSEEGIQALDEVIFSLETYDITTVRASVGMYLISKYIRKNTDSVVIFSGEGSDELTQGYIYFHKAPSPEKAEEESERLLKELYLFDVLRADRTTAAHGLELRVPFLDHRFSSYYLSLPPEMRIPKNGIEKHLLRETFEDSNLLPKEILWRPKEAFSDGITSVKNSWFKILQDYVEHQVDDEMMATAAQKFPFNTPKTKEGYYYRQIFERHYPGRADWLTHYWMPKWINATDPSARTLTHYKSAAKA.

Cysteine 2 serves as the catalytic For GATase activity. The 190-residue stretch at cysteine 2 to lysine 191 folds into the Glutamine amidotransferase type-2 domain. L-glutamine contacts are provided by residues arginine 49–valine 53, asparagine 75–glutamate 77, and aspartate 97. The region spanning histidine 213–tyrosine 536 is the Asparagine synthetase domain. ATP is bound by residues leucine 256, isoleucine 288, and serine 363–glycine 364. Lysine 385 bears the N6-acetyllysine mark. Threonine 545 is modified (phosphothreonine). Serine 557 is subject to Phosphoserine.

It catalyses the reaction L-aspartate + L-glutamine + ATP + H2O = L-asparagine + L-glutamate + AMP + diphosphate + H(+). The protein operates within amino-acid biosynthesis; L-asparagine biosynthesis; L-asparagine from L-aspartate (L-Gln route): step 1/1. The polypeptide is Asparagine synthetase [glutamine-hydrolyzing] (ASNS) (Cricetulus griseus (Chinese hamster)).